A 512-amino-acid chain; its full sequence is NADH-quinone oxidoreductase subunit N 2 (512 aa).

A run of 14 helical transmembrane segments spans residues 23–43 (AFVPEIFLSGLFLLVVTIDLF), 50–70 (TIIPAVSVIGLIISGYFVYLQ), 88–108 (FAIFFKYLFIVSGVFAVLISI), 120–140 (SLGEYYSLIVAMVLGMFLMAS), 144–164 (LLMMFLSLEMVSIISYILVGY), 179–199 (VIYGSVSSGLMIYGFSIIYGL), 220–240 (ITLMLGSLLILGGFGYKAGVV), 254–274 (PTPITAYLSVGSKAAGFAMLI), 295–315 (WVTLLSVVSVVSMVLGNVVAL), 323–343 (LLAYSSIAHAGYILLGVIVAD), 351–371 (LFYLAAYTIMNIGAFFVIILI), 394–414 (AASLTIFLVSLTGLPPTVGFI), 429–449 (VFVWLAVIGVLTSVVSLYFYF), and 477–497 (LVAFLMILTVVFGLYFTPLSV).

This sequence belongs to the complex I subunit 2 family. As to quaternary structure, NDH-1 is composed of 14 different subunits. Subunits NuoA, H, J, K, L, M, N constitute the membrane sector of the complex.

It localises to the cell inner membrane. It catalyses the reaction a quinone + NADH + 5 H(+)(in) = a quinol + NAD(+) + 4 H(+)(out). Functionally, NDH-1 shuttles electrons from NADH, via FMN and iron-sulfur (Fe-S) centers, to quinones in the respiratory chain. The immediate electron acceptor for the enzyme in this species is believed to be a menaquinone. Couples the redox reaction to proton translocation (for every two electrons transferred, four hydrogen ions are translocated across the cytoplasmic membrane), and thus conserves the redox energy in a proton gradient. This Chloroherpeton thalassium (strain ATCC 35110 / GB-78) protein is NADH-quinone oxidoreductase subunit N 2.